Here is a 291-residue protein sequence, read N- to C-terminus: Probable S-adenosylmethionine-dependent methyltransferase CRG1 (291 aa).

It belongs to the methyltransferase superfamily.

It localises to the cytoplasm. Probable S-adenosylmethionine-dependent methyltransferase which mediates cantharidin resistance. This chain is Probable S-adenosylmethionine-dependent methyltransferase CRG1 (CRG1), found in Saccharomyces cerevisiae (strain ATCC 204508 / S288c) (Baker's yeast).